Consider the following 214-residue polypeptide: Large ribosomal subunit protein uL1 (214 aa).

It belongs to the universal ribosomal protein uL1 family. Component of the large ribosomal subunit.

The protein resides in the cytoplasm. Functionally, component of the large ribosomal subunit. The ribosome is a large ribonucleoprotein complex responsible for the synthesis of proteins in the cell. In Entamoeba histolytica (strain ATCC 30459 / HM-1:IMSS / ABRM), this protein is Large ribosomal subunit protein uL1 (RPL10A).